The following is a 630-amino-acid chain: MESGPESLQPLEHGVAAGPAPGTGSPQEGQQETRLAAGDGPGVWAAESSGGKGQGAAAGGRSLSDSASPAGSPQVLVPCSSLPRLDLKESDLESPAAQKEPVRGQHKVTASPETAEAGADHGLGPEGDGGARPDPAGTCQEESAAAGSSEPSSGGGLSSSCSDPSPPGESPSLDSLESFSNLHSFPSSSEFNSEEGAENRVPEEEEGAAVLPGAVPLCGEEEVEEEEAQVLAASKERFPGQSVYHIKWIQWKEENTPIITQNENGPCPLLAILNVLLLAWKVKLPPMMEIITAEQLMEYLGDYMLDTKPKEISEIQRLNYEQNMSDAMAVLHKLQTGLDVNVKFTGVRVFEYTPECIVFDLLDIPLYHGWLVDPQIDDIVKAVGNCSYNQLVEKIISCKQSENSELVSEGFVAEQFLNNTATQLTYHGLCELTSTVQEGELCVFFRNNHFSTMTKYKGLLYLLVTDQGFLTEEKVVWESLHNVDGDGNFCDSEFHLRPPSDPETVYRGQQDQIDQDYLMALSLQQEQQSQEINWEQIPEGISDLELAKKLQEEEDRRASQYYQEQEQAAAAAASASASASASASTQAPQSQPVQASPSSGRQSGNSERKRKEPREKDKEKEKEKNSCVIL.

The segment at 1–209 is disordered; the sequence is MESGPESLQP…RVPEEEEGAA (209 aa). Positions 24 to 33 are enriched in polar residues; the sequence is GSPQEGQQET. Residue Ser94 is modified to Phosphoserine. Low complexity-rich tracts occupy residues 141–163 and 170–191; these read EESAAAGSSEPSSGGGLSSSCSD and SPSLDSLESFSNLHSFPSSSEF. Residue Cys267 is the Nucleophile of the active site. His449 serves as the catalytic Proton acceptor. The ubiquitin-binding domain (UBD) stretch occupies residues 508–560; that stretch reads GQQDQIDQDYLMALSLQQEQQSQEINWEQIPEGISDLELAKKLQEEEDRRASQ. Positions 564-599 are enriched in low complexity; that stretch reads EQEQAAAAAASASASASASASTQAPQSQPVQASPSS. Positions 564–630 are disordered; it reads EQEQAAAAAA…EKEKNSCVIL (67 aa). Residues 606 to 630 are compositionally biased toward basic and acidic residues; sequence SERKRKEPREKDKEKEKEKNSCVIL.

It belongs to the MINDY deubiquitinase family. FAM63 subfamily.

It catalyses the reaction Thiol-dependent hydrolysis of ester, thioester, amide, peptide and isopeptide bonds formed by the C-terminal Gly of ubiquitin (a 76-residue protein attached to proteins as an intracellular targeting signal).. Functionally, hydrolase that can remove 'Lys-48'-linked conjugated ubiquitin from proteins. Can also bind to polyubiquitin chains of different linkage types, including 'Lys-6', 'Lys-11', 'Lys-29', 'Lys-33' and 'Lys-63'. May play a regulatory role at the level of protein turnover. In Bos taurus (Bovine), this protein is Ubiquitin carboxyl-terminal hydrolase MINDY-2 (MINDY2).